The sequence spans 515 residues: 2-isopropylmalate synthase (515 aa).

In terms of domain architecture, Pyruvate carboxyltransferase spans Val-5–His-267. Asp-14, His-202, His-204, and Asn-238 together coordinate Mn(2+). The segment at Lys-392–Val-515 is regulatory domain.

Belongs to the alpha-IPM synthase/homocitrate synthase family. LeuA type 1 subfamily. In terms of assembly, homodimer. Requires Mn(2+) as cofactor.

It localises to the cytoplasm. It catalyses the reaction 3-methyl-2-oxobutanoate + acetyl-CoA + H2O = (2S)-2-isopropylmalate + CoA + H(+). The protein operates within amino-acid biosynthesis; L-leucine biosynthesis; L-leucine from 3-methyl-2-oxobutanoate: step 1/4. In terms of biological role, catalyzes the condensation of the acetyl group of acetyl-CoA with 3-methyl-2-oxobutanoate (2-ketoisovalerate) to form 3-carboxy-3-hydroxy-4-methylpentanoate (2-isopropylmalate). In Vibrio vulnificus (strain CMCP6), this protein is 2-isopropylmalate synthase.